The chain runs to 151 residues: Neuroglobin (151 aa).

One can recognise a Globin domain in the interval 1–149; it reads MERPEQELIR…VVQAMSRGWD (149 aa). Residues His-64 and His-96 each coordinate heme b.

This sequence belongs to the globin family. As to quaternary structure, monomer. Homodimer and homotetramer; disulfide-linked. Mainly monomeric but also detected as part of homodimers and homotetramers. Interacts with 14-3-3 proteins; regulates the phosphorylation of NGB. Could interact (ferrous form) with G-alpha(i) proteins (GTP-bound form). Phosphorylated during hypoxia by ERK1/ERK2. Phosphorylation regulates the heme pocket hexacoordination preventing the association of His-64 with the heme metal center. Thereby, promotes the access of dioxygen and nitrite to the heme and stimulates the nitrite reductase activity. Phosphorylation during hypoxia is stabilized by 14-3-3 proteins.

It localises to the cytoplasm. It is found in the cytosol. The protein localises to the mitochondrion matrix. The catalysed reaction is Fe(III)-heme b-[protein] + nitric oxide + H2O = Fe(II)-heme b-[protein] + nitrite + 2 H(+). Its function is as follows. Monomeric globin with a bis-histidyl six-coordinate heme-iron atom through which it can bind dioxygen, carbon monoxide and nitric oxide. Could help transport oxygen and increase its availability to the metabolically active neuronal tissues, though its low quantity in tissues as well as its high affinity for dioxygen, which may limit its oxygen-releasing ability, argue against it. The ferrous/deoxygenated form exhibits a nitrite reductase activity and it could produce nitric oxide which in turn inhibits cellular respiration in response to hypoxia. In its ferrous/deoxygenated state, it may also exhibit GDI (Guanine nucleotide Dissociation Inhibitor) activity toward heterotrimeric G-alpha proteins, thereby regulating signal transduction to facilitate neuroprotective responses in the wake of hypoxia and associated oxidative stress. The chain is Neuroglobin from Oryctolagus cuniculus (Rabbit).